The chain runs to 274 residues: Undecaprenyl-diphosphatase (274 aa).

Transmembrane regions (helical) follow at residues 40 to 60 (PGAA…LMFF), 90 to 110 (WFII…KDVI), 114 to 134 (FRSL…LGVA), 147 to 167 (ISLR…IPGV), 190 to 210 (YAFL…LKDI), 221 to 241 (PTIV…AWLL), and 252 to 272 (FVLY…TGVI).

The protein belongs to the UppP family.

The protein localises to the cell membrane. It catalyses the reaction di-trans,octa-cis-undecaprenyl diphosphate + H2O = di-trans,octa-cis-undecaprenyl phosphate + phosphate + H(+). Functionally, catalyzes the dephosphorylation of undecaprenyl diphosphate (UPP). Confers resistance to bacitracin. This Nocardioides sp. (strain ATCC BAA-499 / JS614) protein is Undecaprenyl-diphosphatase.